Consider the following 168-residue polypeptide: Peptide deformylase (168 aa).

Residues Cys92 and His134 each contribute to the Fe cation site. Residue Glu135 is part of the active site. Fe cation is bound at residue His138.

Belongs to the polypeptide deformylase family. Fe(2+) serves as cofactor.

The catalysed reaction is N-terminal N-formyl-L-methionyl-[peptide] + H2O = N-terminal L-methionyl-[peptide] + formate. In terms of biological role, removes the formyl group from the N-terminal Met of newly synthesized proteins. Requires at least a dipeptide for an efficient rate of reaction. N-terminal L-methionine is a prerequisite for activity but the enzyme has broad specificity at other positions. This is Peptide deformylase from Azotobacter vinelandii (strain DJ / ATCC BAA-1303).